The chain runs to 497 residues: Bloodstream-specific protein 2 (497 aa).

The first 14 residues, 1-14 (MRAIFLVALALATM), serve as a signal peptide directing secretion. In terms of domain architecture, Thioredoxin 1 spans 15–124 (RESTAESLKL…IIKYIKANVG (110 aa)). The N-linked (GlcNAc...) asparagine glycan is linked to asparagine 30. A disulfide bond links cysteine 48 and cysteine 51. 6 N-linked (GlcNAc...) asparagine glycosylation sites follow: asparagine 63, asparagine 85, asparagine 153, asparagine 154, asparagine 250, and asparagine 278. Residues 334–455 (EPTIKSLPVP…VYEFVRKHVT (122 aa)) form the Thioredoxin 2 domain. Residues cysteine 378 and cysteine 381 each act as nucleophile in the active site. A disulfide bridge links cysteine 378 with cysteine 381. Asparagine 413, asparagine 465, asparagine 476, asparagine 482, asparagine 485, and asparagine 488 each carry an N-linked (GlcNAc...) asparagine glycan. A disordered region spans residues 461–497 (EKPANVTEEKKSEEENKSSKSNESNDSNESNVDKQDL). Residues 467-480 (TEEKKSEEENKSSK) show a composition bias toward basic and acidic residues. Low complexity predominate over residues 481–490 (SNESNDSNES).

Belongs to the protein disulfide isomerase family.

The polypeptide is Bloodstream-specific protein 2 (BS2) (Trypanosoma brucei brucei).